Reading from the N-terminus, the 6298-residue chain is Adhesion G-protein coupled receptor V1 (6298 aa).

Residues 1 to 28 form the signal peptide; that stretch reads MSVTSEPGMISSFLLVYLSTLFISFVFG. 22 consecutive Calx-beta domains span residues 29 to 116, 132 to 236, 251 to 362, 389 to 489, 646 to 746, 764 to 862, 877 to 980, 994 to 1094, 1108 to 1208, 1440 to 1540, 1562 to 1662, 1706 to 1805, 1846 to 1948, 1962 to 2075, 2103 to 2202, 2218 to 2320, 2437 to 2537, 2576 to 2672, 2687 to 2786, 2810 to 2921, 2945 to 3044, and 3067 to 3167; these read EAEI…FHLT, ASVT…IQLR, VEII…IMLL, YGVL…LTIL, PAIA…TLSL, DLII…VILS, VNIT…IILL, ASLR…IVLF, ATVI…LRLV, AMPR…FLLK, QKSD…VTLV, TGLP…VELL, ILVT…VSIL, TLTI…IELF, HLVI…VQLL, VITI…VQLA, TLCL…FLIS, FIIY…VRLG, VTVN…VVLY, LTVE…VNLT, QIVI…LLLT, and DGPG…VCTL. Topologically, residues 29–5901 are extracellular; it reads EAEIRFTGQT…TDNSSSYNEA (5873 aa). EAR repeat units follow at residues 3251-3292, 3293-3341, 3344-3389, 3391-3435, 3437-3484, and 3488-3530; these read VFSI…RWQG, TFVP…MLTA, RLVL…RWNG, NFAW…TWSG, QFIN…VWEM, and SLRY…CWNS. Calx-beta domains lie at 3581–3622, 3636–3736, 3772–3872, 3919–4003, 4017–4120, 4135–4235, 4251–4351, 4384–4484, 4507–4607, 4628–4728, 4989–5089, 5281–5325, and 5361–5461; these read QSDF…RVQL, SVRV…VVTL, GAVR…VTIA, GGVI…ISLV, VNVV…IELT, SVII…EFQL, ARIT…LAIT, RIII…ILLI, SPFG…IVQL, KFGD…AVQL, TTAE…INLT, AVEE…YVFL, and IGFS…FVEL. The GAIN-B domain occupies 5740–5896; that stretch reads SILALHWNPQ…AVYAQTDNSS (157 aa). 2 disulfides stabilise this stretch: Cys-5849/Cys-5878 and Cys-5866/Cys-5880. Residues 5849–5896 form a GPS region; that stretch reads CLLWNQAAASWLSDSQFCKVVEDASDYVECACSHMSVYAVYAQTDNSS. Residues 5902 to 5922 traverse the membrane as a helical segment; that stretch reads FFSAGLICISGLCLAVVSHMF. Topologically, residues 5923–5932 are cytoplasmic; sequence CARHSMFAAK. The helical transmembrane segment at 5933–5953 threads the bilayer; it reads LLTHMMVASLGTQILFLASAY. Residues 5954–5973 lie on the Extracellular side of the membrane; it reads ASPHLSEESCSAVAAVAHYL. The helical transmembrane segment at 5974–5994 threads the bilayer; sequence YLCQFSWMLIQSVNFWYVLVV. The Cytoplasmic portion of the chain corresponds to 5995–6003; it reads SDEHTERRC. A helical membrane pass occupies residues 6004–6024; sequence LLFCLLSWGLPSFVVILLILI. At 6025–6052 the chain is on the extracellular side; that stretch reads LRGIYHRSMPQIYGLIHGDLCFIPNIYA. A helical transmembrane segment spans residues 6053-6073; the sequence is ALFTAALVPLMCLVVVFVVFI. The Cytoplasmic portion of the chain corresponds to 6074–6097; sequence HAYQLKPQWKGYDDVFRGRTNAAE. A helical membrane pass occupies residues 6098–6118; sequence IPLILYLFALISMTWLWGGLH. Over 6119-6126 the chain is Extracellular; it reads MAYGHFWM. Residues 6127 to 6147 traverse the membrane as a helical segment; the sequence is LVLFVIFNSLQGLYVFVVYFI. Residues 6148–6298 are Cytoplasmic-facing; the sequence is LHNQTCCPMK…RRIPIADTHL (151 aa). Disordered stretches follow at residues 6206-6242 and 6264-6283; these read ERSS…GSLI and SVSD…LTDS. 2 stretches are compositionally biased toward polar residues: residues 6208 to 6226 and 6265 to 6283; these read SSFQ…SPQN and VSDN…LTDS.

Belongs to the G-protein coupled receptor 2 family. Adhesion G-protein coupled receptor (ADGR) subfamily. Forms a heterodimer, consisting of a large extracellular region (alpha subunit) non-covalently linked to a seven-transmembrane moiety (beta subunit). Interacts (via the cytoplasmic region) with PDZD7. Component of USH2 complex, composed of ADGRV1, PDZD7, USH2A and WHRN. Interacts with USH2A and WHRN. Interacts (via the cytoplasmic region) with MYO7A (via MyTH4-FERM domains). In terms of processing, autoproteolytically cleaved into 2 subunits, an extracellular alpha subunit and a seven-transmembrane subunit. In terms of tissue distribution, expressed by oligodendrocytes. In midbrain, enriched in the myelinated regions of the superior and inferior colliculi. In the cochlea, expressed in developing hair cells. Expressed by photoreceptors in the retina.

The protein resides in the cell membrane. Its subcellular location is the cell projection. It is found in the stereocilium membrane. It localises to the photoreceptor inner segment. The protein localises to the secreted. Its function is as follows. G-protein coupled receptor which has an essential role in the development of hearing and vision. Couples to G-alpha(i)-proteins, GNAI1/2/3, G-alpha(q)-proteins, GNAQ, as well as G-alpha(s)-proteins, GNAS, inhibiting adenylate cyclase (AC) activity and cAMP production. Required for the hair bundle ankle formation, which connects growing stereocilia in developing cochlear hair cells of the inner ear. In response to extracellular calcium, activates kinases PKA and PKC to regulate myelination by inhibiting the ubiquitination of MAG, thus enhancing the stability of this protein in myelin-forming cells of the auditory pathway. In retina photoreceptors, the USH2 complex is required for the maintenance of periciliary membrane complex that seems to play a role in regulating intracellular protein transport. Involved in the regulation of bone metabolism. Cleaved ADGRV1 beta-subunit couples with G-alpha(i)-proteins, GNAI1/2/3, and constitutively inhibits adenylate cyclase (AC) activity with a stronger effect than full ADGRV1. The protein is Adhesion G-protein coupled receptor V1 of Mus musculus (Mouse).